A 778-amino-acid chain; its full sequence is MVNLDKGLLKIIKDESLEDYFIKANFGLEKENVRVTESGNLALTPHPKAFGDREKNAYIKTDFSESQLEMVTPVCNTLEEVYSFICNLNKVVSLEIMKNGEFLWPQSNPPILPREEEIPIAKLSNREDELYRENLSYKYGKKKQVISGIHYNFSFKEEFIKLLYKELKVEKDFREFKDDIYLRMARNFQKYHWLLIYLTGASPVFHESYIEEIKEEGEKLGEDSYYIKDDTSLRNSSYGYKNKKDYYVSYNSIEEYASDIKNLVKDKEIQSIKEYYNPIRLKSLGSEDMLESLLHKGIDYLEVRLLDLDPLSIQGVSKETLYLLHLFMIYTLLKENKEITYKDQEEFFKNHDMVALKGRNEEAVIYENGVPVLLKDKGREILSEMDEIVEILFSNNEEFKNVIKRALEKINNPHDTISEKLIKDIKEEGYINFHMRLAKEYLNNFKNKEFNLVGYEDLELSTQILILDAIKRGIEFNIMDRLENFISLSDGEKVEYVKQATKTSKDSYITALIMENKLVTKDILRENNIRVPKGKDYDNIDEAKKDFRLFKDEKIVIKPKSTNFGLGISIFPGEYSREDYDKAVEIAFREDSSILIEEFMTGKEYRFLVIGEEVVGILHREPANVIGNGESTIEELVSEKNKDPLRGKGYKTPLEKIKLGEIEEMFLKNQGLSFKSIPKNGEKIYLRENSNISTGGDSIDFTDKIHPSYKEVALKSAKAVKALICGVDMVIDNIEEEAKEKNHGIIELNFNPAIHIHCFPYKGENRKAGEKILDLLFN.

Residues 1-354 (MVNLDKGLLK…EEFFKNHDMV (354 aa)) form a glutamate--cysteine ligase region. Residues 521–777 (KDILRENNIR…AGEKILDLLF (257 aa)) form the ATP-grasp domain. 548 to 606 (RLFKDEKIVIKPKSTNFGLGISIFPGEYSREDYDKAVEIAFREDSSILIEEFMTGKEYR) lines the ATP pocket. The Mg(2+) site is built by Asp-728, Glu-747, and Asn-749. Mn(2+) is bound by residues Asp-728, Glu-747, and Asn-749.

It in the N-terminal section; belongs to the glutamate--cysteine ligase type 1 family. Type 2 subfamily. As to quaternary structure, monomer. Mg(2+) is required as a cofactor. It depends on Mn(2+) as a cofactor.

It carries out the reaction L-cysteine + L-glutamate + ATP = gamma-L-glutamyl-L-cysteine + ADP + phosphate + H(+). The catalysed reaction is gamma-L-glutamyl-L-cysteine + glycine + ATP = glutathione + ADP + phosphate + H(+). The protein operates within sulfur metabolism; glutathione biosynthesis; glutathione from L-cysteine and L-glutamate: step 1/2. It participates in sulfur metabolism; glutathione biosynthesis; glutathione from L-cysteine and L-glutamate: step 2/2. Synthesizes glutathione from L-glutamate and L-cysteine via gamma-L-glutamyl-L-cysteine. The protein is Glutathione biosynthesis bifunctional protein GshAB of Clostridium perfringens (strain 13 / Type A).